Consider the following 487-residue polypeptide: Probable cytochrome P450 313a5 (487 aa).

Y223 carries the post-translational modification Phosphotyrosine. Position 433 (C433) interacts with heme.

This sequence belongs to the cytochrome P450 family. Heme serves as cofactor.

The protein localises to the endoplasmic reticulum membrane. Its subcellular location is the microsome membrane. Its function is as follows. May be involved in the metabolism of insect hormones and in the breakdown of synthetic insecticides. This is Probable cytochrome P450 313a5 (Cyp313a5) from Drosophila melanogaster (Fruit fly).